Here is a 92-residue protein sequence, read N- to C-terminus: Cell division protein FtsB (92 aa).

Over 1-3 (MRL) the chain is Cytoplasmic. A helical transmembrane segment spans residues 4–21 (FVFFMLCLLVLLQYHLWF). Residues 22-92 (GKNGLGDRHN…TFFRIVPKED (71 aa)) lie on the Periplasmic side of the membrane. Residues 28–62 (DRHNLQEEVTLILENNSELRQRNQMMFSEIKDLKE) adopt a coiled-coil conformation.

This sequence belongs to the FtsB family. In terms of assembly, part of a complex composed of FtsB, FtsL and FtsQ.

It localises to the cell inner membrane. Its function is as follows. Essential cell division protein. May link together the upstream cell division proteins, which are predominantly cytoplasmic, with the downstream cell division proteins, which are predominantly periplasmic. The sequence is that of Cell division protein FtsB from Psychromonas ingrahamii (strain DSM 17664 / CCUG 51855 / 37).